The chain runs to 430 residues: tRNA(Ile)-lysidine synthase (430 aa).

27–32 provides a ligand contact to ATP; it reads SGGSDS.

Belongs to the tRNA(Ile)-lysidine synthase family.

It is found in the cytoplasm. It catalyses the reaction cytidine(34) in tRNA(Ile2) + L-lysine + ATP = lysidine(34) in tRNA(Ile2) + AMP + diphosphate + H(+). Functionally, ligates lysine onto the cytidine present at position 34 of the AUA codon-specific tRNA(Ile) that contains the anticodon CAU, in an ATP-dependent manner. Cytidine is converted to lysidine, thus changing the amino acid specificity of the tRNA from methionine to isoleucine. This chain is tRNA(Ile)-lysidine synthase, found in Rickettsia bellii (strain RML369-C).